A 1088-amino-acid polypeptide reads, in one-letter code: DEAD-box ATP-dependent RNA helicase 40 (1088 aa).

Disordered stretches follow at residues 1–28 (MATT…PWKG), 47–178 (TQYE…QYAH), and 192–254 (TQGL…QNTH). Ala-2 bears the N-acetylalanine mark. The WW domain occupies 20–54 (PTLPQPWKGLIDGSTGILYYWNPETNVTQYERPSA). Low complexity-rich tracts occupy residues 87-137 (VGHV…SQSM), 148-171 (QTYQ…MPQQ), and 200-215 (QTPQ…PSQQ). Residues 222 to 231 (PKREGDEFHG) show a composition bias toward basic and acidic residues. Polar residues predominate over residues 236–254 (GFSQPHLPNSERSPSQNTH). The Q motif motif lies at 435–463 (ITFESSGLPPEILRELLSAGFPSPTPIQA). The Helicase ATP-binding domain maps to 466 to 640 (WPIALQSRDI…SDLLVNPVQV (175 aa)). 479–486 (AKTGSGKT) contributes to the ATP binding site. The short motif at 588–591 (DEAD) is the DEAD box element. A Helicase C-terminal domain is found at 669–813 (RLEQILRSQE…QVPPQVRDIA (145 aa)). Composition is skewed to gly residues over residues 861 to 885 (EGGF…GGRF), 893 to 902 (GRGGNRGRGF), 911 to 920 (NVGGRGGFGR), and 932 to 944 (FGRG…GRGV). The disordered stretch occupies residues 861–1033 (EGGFGGREGG…RRDRAPRVSG (173 aa)). The span at 945 to 963 (GRFDNRRGRSRSRSPDLVR) shows a compositional bias: basic and acidic residues. Low complexity predominate over residues 969 to 983 (SSYSRSRSRSGSYSR). The span at 984 to 1013 (SRSRSRSWSRSRSRSPRHSRDRGGHNRSRS) shows a compositional bias: basic residues.

It belongs to the DEAD box helicase family. DDX5/DBP2 subfamily.

The protein resides in the nucleus. It catalyses the reaction ATP + H2O = ADP + phosphate + H(+). Functionally, ATP-dependent RNA helicase involved nonsense-mediated mRNA decay and ribosome biogenesis through rRNA processing. This Arabidopsis thaliana (Mouse-ear cress) protein is DEAD-box ATP-dependent RNA helicase 40 (RH40).